Consider the following 432-residue polypeptide: Enolase (432 aa).

Residue Q164 coordinates (2R)-2-phosphoglycerate. Catalysis depends on E206, which acts as the Proton donor. Residues D243, E284, and D311 each contribute to the Mg(2+) site. (2R)-2-phosphoglycerate is bound by residues K336, R365, S366, and K387. K336 functions as the Proton acceptor in the catalytic mechanism.

Belongs to the enolase family. Requires Mg(2+) as cofactor.

It localises to the cytoplasm. The protein resides in the secreted. The protein localises to the cell surface. The enzyme catalyses (2R)-2-phosphoglycerate = phosphoenolpyruvate + H2O. The protein operates within carbohydrate degradation; glycolysis; pyruvate from D-glyceraldehyde 3-phosphate: step 4/5. Functionally, catalyzes the reversible conversion of 2-phosphoglycerate (2-PG) into phosphoenolpyruvate (PEP). It is essential for the degradation of carbohydrates via glycolysis. The chain is Enolase from Synechococcus sp. (strain JA-3-3Ab) (Cyanobacteria bacterium Yellowstone A-Prime).